The sequence spans 272 residues: Phosphatidylglycerol--prolipoprotein diacylglyceryl transferase (272 aa).

7 helical membrane passes run 17–37 (LQVH…WGLA), 55–75 (LVFY…VLFY), 90–110 (VWTG…AMLF), 125–145 (FIAP…FIGG), 174–194 (PSQI…LWWF), 202–222 (MAVS…MEFF), and 230–250 (GFIL…MLLI). Arginine 138 lines the a 1,2-diacyl-sn-glycero-3-phospho-(1'-sn-glycerol) pocket.

It belongs to the Lgt family.

The protein resides in the cell inner membrane. The catalysed reaction is L-cysteinyl-[prolipoprotein] + a 1,2-diacyl-sn-glycero-3-phospho-(1'-sn-glycerol) = an S-1,2-diacyl-sn-glyceryl-L-cysteinyl-[prolipoprotein] + sn-glycerol 1-phosphate + H(+). It functions in the pathway protein modification; lipoprotein biosynthesis (diacylglyceryl transfer). Its function is as follows. Catalyzes the transfer of the diacylglyceryl group from phosphatidylglycerol to the sulfhydryl group of the N-terminal cysteine of a prolipoprotein, the first step in the formation of mature lipoproteins. The protein is Phosphatidylglycerol--prolipoprotein diacylglyceryl transferase of Acinetobacter baumannii (strain ACICU).